We begin with the raw amino-acid sequence, 367 residues long: Homoserine O-acetyltransferase (367 aa).

The region spanning Asn-44 to Glu-350 is the AB hydrolase-1 domain. Ser-150 (nucleophile) is an active-site residue. Residue Arg-217 participates in substrate binding. Residues Asp-311 and His-344 contribute to the active site. Position 345 (Asp-345) interacts with substrate.

Belongs to the AB hydrolase superfamily. MetX family. As to quaternary structure, homodimer.

The protein localises to the cytoplasm. It catalyses the reaction L-homoserine + acetyl-CoA = O-acetyl-L-homoserine + CoA. It participates in amino-acid biosynthesis; L-methionine biosynthesis via de novo pathway; O-acetyl-L-homoserine from L-homoserine: step 1/1. Its function is as follows. Transfers an acetyl group from acetyl-CoA to L-homoserine, forming acetyl-L-homoserine. This is Homoserine O-acetyltransferase from Geotalea daltonii (strain DSM 22248 / JCM 15807 / FRC-32) (Geobacter daltonii).